Consider the following 374-residue polypeptide: tRNA (adenine(58)-N(1))-methyltransferase catalytic subunit TRM61 (374 aa).

S-adenosyl-L-methionine is bound by residues 120–122 (SGS), glutamate 138, arginine 143, 167–168 (DV), and aspartate 202.

The protein belongs to the class I-like SAM-binding methyltransferase superfamily. TRM61 family. As to quaternary structure, heterotetramer; composed of two copies of TRM6 and two copies of TRM61.

It is found in the nucleus. The catalysed reaction is adenosine(58) in tRNA + S-adenosyl-L-methionine = N(1)-methyladenosine(58) in tRNA + S-adenosyl-L-homocysteine + H(+). Catalytic subunit of tRNA (adenine-N(1)-)-methyltransferase, which catalyzes the formation of N(1)-methyladenine at position 58 (m1A58) in initiator methionyl-tRNA. In Candida glabrata (strain ATCC 2001 / BCRC 20586 / JCM 3761 / NBRC 0622 / NRRL Y-65 / CBS 138) (Yeast), this protein is tRNA (adenine(58)-N(1))-methyltransferase catalytic subunit TRM61 (TRM61).